The primary structure comprises 212 residues: Large ribosomal subunit protein uL3 (212 aa).

The tract at residues 131–155 (RGNMTHGSKNHRLPGSTGAGTTPGR) is disordered.

Belongs to the universal ribosomal protein uL3 family. Part of the 50S ribosomal subunit. Forms a cluster with proteins L14 and L19.

Its function is as follows. One of the primary rRNA binding proteins, it binds directly near the 3'-end of the 23S rRNA, where it nucleates assembly of the 50S subunit. The protein is Large ribosomal subunit protein uL3 of Microcystis aeruginosa (strain NIES-843 / IAM M-2473).